The sequence spans 843 residues: Beta-mannosidase B (843 aa).

The Proton donor role is filled by E432.

It belongs to the glycosyl hydrolase 2 family. Beta-mannosidase B subfamily.

It catalyses the reaction Hydrolysis of terminal, non-reducing beta-D-mannose residues in beta-D-mannosides.. It participates in glycan metabolism; N-glycan degradation. In terms of biological role, exoglycosidase that cleaves the single beta-linked mannose residue from the non-reducing end of beta-mannosidic oligosaccharides of various complexity and length. Prefers mannobiose over mannotriose and has no activity against polymeric mannan. Is also severely restricted by galactosyl substitutions at the +1 subsite. Releases the terminal mannose residue from mannobiose, mannotriose and galactosyl-mannotriose (GM3), but not from galactosyl-mannobiose (GM2) or di-galactosyl-mannopentaose (G2M5). The protein is Beta-mannosidase B (mndB) of Emericella nidulans (strain FGSC A4 / ATCC 38163 / CBS 112.46 / NRRL 194 / M139) (Aspergillus nidulans).